The following is a 336-amino-acid chain: Phosphate acyltransferase (336 aa).

The protein belongs to the PlsX family. As to quaternary structure, homodimer. Probably interacts with PlsY.

Its subcellular location is the cytoplasm. The catalysed reaction is a fatty acyl-[ACP] + phosphate = an acyl phosphate + holo-[ACP]. It participates in lipid metabolism; phospholipid metabolism. In terms of biological role, catalyzes the reversible formation of acyl-phosphate (acyl-PO(4)) from acyl-[acyl-carrier-protein] (acyl-ACP). This enzyme utilizes acyl-ACP as fatty acyl donor, but not acyl-CoA. This chain is Phosphate acyltransferase, found in Pseudomonas putida (strain GB-1).